The chain runs to 280 residues: MALKSYKPTTPGQRGLVLIDRSELWKGRPVKSLTEGLSKKGGRNNTGRITMRRRGGGAKRLYRIVDFKRRKFDVEGVITRIEYDPNRTAFIALVTYTDGEQAYILAPQRTAVGDKVVASQKADIKPGNAMPFSGMPIGTIVHNIELKPGKGGQIARAAGTYAQFVGRDGGYAQIRLSSGELRLVRQECMATVGAVSNPDNSNQNLGKAGRNRHKGIRPSVRGVVMNPVDHPHGGGEGRTSGGRHPVTPWGKPTKGARTRNKNKASSKLIIRSRHAKKKGR.

Positions 223–280 (VVMNPVDHPHGGGEGRTSGGRHPVTPWGKPTKGARTRNKNKASSKLIIRSRHAKKKGR) are disordered. Residues 254 to 280 (KGARTRNKNKASSKLIIRSRHAKKKGR) show a composition bias toward basic residues.

The protein belongs to the universal ribosomal protein uL2 family. In terms of assembly, part of the 50S ribosomal subunit. Forms a bridge to the 30S subunit in the 70S ribosome.

One of the primary rRNA binding proteins. Required for association of the 30S and 50S subunits to form the 70S ribosome, for tRNA binding and peptide bond formation. It has been suggested to have peptidyltransferase activity; this is somewhat controversial. Makes several contacts with the 16S rRNA in the 70S ribosome. The sequence is that of Large ribosomal subunit protein uL2 from Dinoroseobacter shibae (strain DSM 16493 / NCIMB 14021 / DFL 12).